The primary structure comprises 503 residues: Maturase K (503 aa).

It belongs to the intron maturase 2 family. MatK subfamily.

Its subcellular location is the plastid. It is found in the chloroplast. Its function is as follows. Usually encoded in the trnK tRNA gene intron. Probably assists in splicing its own and other chloroplast group II introns. This chain is Maturase K, found in Panax ginseng (Korean ginseng).